The primary structure comprises 141 residues: ATP synthase epsilon chain (141 aa).

This sequence belongs to the ATPase epsilon chain family. As to quaternary structure, F-type ATPases have 2 components, CF(1) - the catalytic core - and CF(0) - the membrane proton channel. CF(1) has five subunits: alpha(3), beta(3), gamma(1), delta(1), epsilon(1). CF(0) has three main subunits: a, b and c.

It localises to the cell membrane. In terms of biological role, produces ATP from ADP in the presence of a proton gradient across the membrane. The chain is ATP synthase epsilon chain (atpC) from Mycoplasmopsis pulmonis (strain UAB CTIP) (Mycoplasma pulmonis).